Reading from the N-terminus, the 217-residue chain is Probable cutinase 3 (217 aa).

Residues 1-17 form the signal peptide; sequence MSLRSLFVAGLATLALA. 2 disulfides stabilise this stretch: Cys39/Cys118 and Cys65/Cys79. Catalysis depends on Ser129, which acts as the Nucleophile. A disulfide bond links Cys180 and Cys187. Asp184 is a catalytic residue. His197 (proton donor/acceptor) is an active-site residue.

Belongs to the cutinase family.

It is found in the secreted. It carries out the reaction cutin + H2O = cutin monomers.. Functionally, catalyzes the hydrolysis of complex carboxylic polyesters found in the cell wall of plants. Degrades cutin, a macromolecule that forms the structure of the plant cuticle. In Neosartorya fischeri (strain ATCC 1020 / DSM 3700 / CBS 544.65 / FGSC A1164 / JCM 1740 / NRRL 181 / WB 181) (Aspergillus fischerianus), this protein is Probable cutinase 3.